The following is a 105-amino-acid chain: Cell division protein FtsB (105 aa).

At 1–3 (MRI) the chain is on the cytoplasmic side. A helical transmembrane segment spans residues 4 to 21 (VIYSMLVLLIAIQYPLWL). The Periplasmic portion of the chain corresponds to 22–105 (GKGGWLKVYE…DTAKASTVKQ (84 aa)). Positions 32–60 (MEKQVELQEAKNSLLALRNAKLEGDVKDL) form a coiled coil.

This sequence belongs to the FtsB family. Part of a complex composed of FtsB, FtsL and FtsQ.

Its subcellular location is the cell inner membrane. Its function is as follows. Essential cell division protein. May link together the upstream cell division proteins, which are predominantly cytoplasmic, with the downstream cell division proteins, which are predominantly periplasmic. This Polynucleobacter asymbioticus (strain DSM 18221 / CIP 109841 / QLW-P1DMWA-1) (Polynucleobacter necessarius subsp. asymbioticus) protein is Cell division protein FtsB.